Consider the following 426-residue polypeptide: Antigen EM13 (426 aa).

The region spanning 1–240 (MIQERADIEK…TVAKVDADAD (240 aa)) is the F-BAR domain. 2 disordered regions span residues 287–315 (LTSLKTITSPDRGGPIPGTTDSGSNISTS) and 350–369 (ISKEKQRVEDTPPYPDFVDD). Polar residues predominate over residues 305 to 315 (TTDSGSNISTS). Positions 371 to 426 (RPGVPIRALYDYVGVEADELSFNSGDLFEKLEDEDEQGWCKGRKDGRVGLYPRQLR) constitute an SH3 domain.

This chain is Antigen EM13 (EM13), found in Echinococcus multilocularis (Fox tapeworm).